The chain runs to 179 residues: Phospholipase A2 (179 aa).

The first 21 residues, 1–21 (MHALRSSVLALWLCLHVSVRA), serve as a signal peptide directing secretion. Residues 22–39 (WMTYRSANGLDEYEPEDR) constitute a propeptide that is removed on maturation. Ca(2+)-binding residues include Trp-47, Gly-49, and Gly-51. 5 disulfide bridges follow: Cys-48–Cys-70, Cys-69–Cys-109, Cys-76–Cys-102, Cys-100–Cys-133, and Cys-142–Cys-150. Residue His-73 is part of the active site. Position 74 (Asp-74) interacts with Ca(2+). Residue Asp-103 is part of the active site. An N-linked (GlcNAc...) asparagine glycan is attached at Asn-112.

Requires Ca(2+) as cofactor. As to expression, expressed by the venom gland.

The protein localises to the secreted. The enzyme catalyses a 1,2-diacyl-sn-glycero-3-phosphocholine + H2O = a 1-acyl-sn-glycero-3-phosphocholine + a fatty acid + H(+). In terms of biological role, PLA2 catalyzes the calcium-dependent hydrolysis of the 2-acyl groups in 3-sn-phosphoglycerides. The chain is Phospholipase A2 from Xylocopa appendiculata circumvolans (Japanese carpenter bee).